The sequence spans 362 residues: Outer membrane porin protein OmpD (362 aa).

Positions 1–21 (MKLKLVAVAVTSLLAAGVVNA) are cleaved as a signal peptide.

The protein belongs to the Gram-negative porin family. In terms of assembly, homotrimer.

It is found in the cell outer membrane. Forms pores that allow passive diffusion of small molecules across the outer membrane. This chain is Outer membrane porin protein OmpD (ompD), found in Salmonella choleraesuis (strain SC-B67).